The following is a 427-amino-acid chain: 3-phosphoshikimate 1-carboxyvinyltransferase (427 aa).

3-phosphoshikimate-binding residues include Lys20, Ser21, and Arg25. Lys20 lines the phosphoenolpyruvate pocket. The phosphoenolpyruvate site is built by Gly92 and Arg120. 3-phosphoshikimate is bound by residues Ser166, Gln168, Asp312, and Lys339. Residue Gln168 participates in phosphoenolpyruvate binding. Asp312 (proton acceptor) is an active-site residue. Phosphoenolpyruvate is bound by residues Arg343 and Arg385.

This sequence belongs to the EPSP synthase family. As to quaternary structure, monomer.

It is found in the cytoplasm. The enzyme catalyses 3-phosphoshikimate + phosphoenolpyruvate = 5-O-(1-carboxyvinyl)-3-phosphoshikimate + phosphate. It participates in metabolic intermediate biosynthesis; chorismate biosynthesis; chorismate from D-erythrose 4-phosphate and phosphoenolpyruvate: step 6/7. Functionally, catalyzes the transfer of the enolpyruvyl moiety of phosphoenolpyruvate (PEP) to the 5-hydroxyl of shikimate-3-phosphate (S3P) to produce enolpyruvyl shikimate-3-phosphate and inorganic phosphate. This Streptococcus equi subsp. zooepidemicus (strain MGCS10565) protein is 3-phosphoshikimate 1-carboxyvinyltransferase.